A 129-amino-acid polypeptide reads, in one-letter code: MSYISGARSLPDEQVRIASTKMDGIGPKKAIQLRYRLGISGNIKIHELTKYQIDQIEQMIAQDHVVHWELKRGERADIERLISISRYRGIRHQDGSPLRGQRTHTNARTARKQIRKGNERRLPKEQATD.

Residues 92–129 form a disordered region; sequence HQDGSPLRGQRTHTNARTARKQIRKGNERRLPKEQATD. A compositionally biased stretch (basic and acidic residues) spans 116–129; that stretch reads KGNERRLPKEQATD.

The protein belongs to the universal ribosomal protein uS13 family. In terms of assembly, part of the small ribosomal subunit.

It is found in the mitochondrion. In terms of biological role, located at the top of the head of the small subunit, it contacts several helices of the 18S rRNA. This is Small ribosomal subunit protein uS13m (RPS13) from Zea mays (Maize).